The primary structure comprises 292 residues: ATP synthase gamma chain (292 aa).

This sequence belongs to the ATPase gamma chain family. In terms of assembly, F-type ATPases have 2 components, CF(1) - the catalytic core - and CF(0) - the membrane proton channel. CF(1) has five subunits: alpha(3), beta(3), gamma(1), delta(1), epsilon(1). CF(0) has three main subunits: a, b and c.

It localises to the cell inner membrane. Functionally, produces ATP from ADP in the presence of a proton gradient across the membrane. The gamma chain is believed to be important in regulating ATPase activity and the flow of protons through the CF(0) complex. The chain is ATP synthase gamma chain from Brucella anthropi (strain ATCC 49188 / DSM 6882 / CCUG 24695 / JCM 21032 / LMG 3331 / NBRC 15819 / NCTC 12168 / Alc 37) (Ochrobactrum anthropi).